A 359-amino-acid chain; its full sequence is Phosphoserine aminotransferase (359 aa).

Position 42 (R42) interacts with L-glutamate. Residues 76–77 (AS), W102, T152, D171, and Q194 each bind pyridoxal 5'-phosphate. An N6-(pyridoxal phosphate)lysine modification is found at K195. 236–237 (NT) serves as a coordination point for pyridoxal 5'-phosphate.

It belongs to the class-V pyridoxal-phosphate-dependent aminotransferase family. SerC subfamily. Homodimer. Pyridoxal 5'-phosphate serves as cofactor.

Its subcellular location is the cytoplasm. The enzyme catalyses O-phospho-L-serine + 2-oxoglutarate = 3-phosphooxypyruvate + L-glutamate. It carries out the reaction 4-(phosphooxy)-L-threonine + 2-oxoglutarate = (R)-3-hydroxy-2-oxo-4-phosphooxybutanoate + L-glutamate. It participates in amino-acid biosynthesis; L-serine biosynthesis; L-serine from 3-phospho-D-glycerate: step 2/3. It functions in the pathway cofactor biosynthesis; pyridoxine 5'-phosphate biosynthesis; pyridoxine 5'-phosphate from D-erythrose 4-phosphate: step 3/5. In terms of biological role, catalyzes the reversible conversion of 3-phosphohydroxypyruvate to phosphoserine and of 3-hydroxy-2-oxo-4-phosphonooxybutanoate to phosphohydroxythreonine. The sequence is that of Phosphoserine aminotransferase from Vesicomyosocius okutanii subsp. Calyptogena okutanii (strain HA).